We begin with the raw amino-acid sequence, 445 residues long: Response regulator protein PilR (445 aa).

The Response regulatory domain maps to 5–119; it reads KALIVDDEPD…RLRELVATAL (115 aa). Residues aspartate 11 and aspartate 54 each carry the 4-aspartylphosphate modification. In terms of domain architecture, Sigma-54 factor interaction spans 135–364; the sequence is LLGESPPMRA…LENMLERAYT (230 aa). Residues 163-170 and 226-235 each bind ATP; these read GESGSGKE and ASGGTLFLDE. Positions 418-437 form a DNA-binding region, H-T-H motif; sequence RWNRTAAAQRLGLTFRSMRY.

Phosphorylated by PilS.

The protein localises to the cytoplasm. Functionally, member of the two-component regulatory system PilS/PilR that regulates the expression of multiple genes including the type IV pilus (T4P) major subunit PilA. Thereby, plays a major role in the regulation of multiple motility pathways. Upon appropriate environmental signals, the histidine kinase PilS transfers the phosphoryl group onto PilR. In turn, PilR functions as a transcriptional activator by direct binding to a cis-acting sequence upstream of the pilin gene promoter leading to its activation. This Pseudomonas aeruginosa (strain ATCC 15692 / DSM 22644 / CIP 104116 / JCM 14847 / LMG 12228 / 1C / PRS 101 / PAO1) protein is Response regulator protein PilR (pilR).